The following is a 792-amino-acid chain: Phenylalanine--tRNA ligase beta subunit (792 aa).

The 117-residue stretch at 40–156 (FPRTENLIVG…AKLNDIDPLK (117 aa)) folds into the tRNA-binding domain. The B5 domain maps to 404–472 (LKDNLIDFDS…KKINVNNLEL (69 aa)). Positions 450, 456, 459, and 460 each coordinate Mg(2+).

This sequence belongs to the phenylalanyl-tRNA synthetase beta subunit family. Type 1 subfamily. As to quaternary structure, tetramer of two alpha and two beta subunits. Mg(2+) is required as a cofactor.

Its subcellular location is the cytoplasm. The enzyme catalyses tRNA(Phe) + L-phenylalanine + ATP = L-phenylalanyl-tRNA(Phe) + AMP + diphosphate + H(+). The sequence is that of Phenylalanine--tRNA ligase beta subunit from Malacoplasma penetrans (strain HF-2) (Mycoplasma penetrans).